The chain runs to 296 residues: tRNA dimethylallyltransferase (296 aa).

8–15 lines the ATP pocket; that stretch reads GPTGSGKT. 10-15 lines the substrate pocket; sequence TGSGKT. Residues 32–35 are interaction with substrate tRNA; the sequence is DSRQ.

The protein belongs to the IPP transferase family. Monomer. Mg(2+) is required as a cofactor.

It catalyses the reaction adenosine(37) in tRNA + dimethylallyl diphosphate = N(6)-dimethylallyladenosine(37) in tRNA + diphosphate. Its function is as follows. Catalyzes the transfer of a dimethylallyl group onto the adenine at position 37 in tRNAs that read codons beginning with uridine, leading to the formation of N6-(dimethylallyl)adenosine (i(6)A). In Leptospira biflexa serovar Patoc (strain Patoc 1 / Ames), this protein is tRNA dimethylallyltransferase.